Consider the following 66-residue polypeptide: Small ribosomal subunit protein bS21 (66 aa).

This sequence belongs to the bacterial ribosomal protein bS21 family.

The sequence is that of Small ribosomal subunit protein bS21 from Persephonella marina (strain DSM 14350 / EX-H1).